Here is a 623-residue protein sequence, read N- to C-terminus: Zona pellucida sperm-binding protein 1 (623 aa).

An N-terminal signal peptide occupies residues 1–20 (MAWGCFVVLLLLAAAPLRLG). Position 21 is a pyrrolidone carboxylic acid (Gln21). Topologically, residues 21–590 (QRLHLEPGFE…GSSRNSSSRM (570 aa)) are extracellular. N-linked (GlcNAc...) asparagine glycosylation is found at Asn49 and Asn68. A disordered region spans residues 182–201 (IHPTPAPPSLGPGPAGSTVP). Residues 226–266 (ERCQVASGHIPCMVNGSSKETCQQAGCCYDSTKEEPCYYGN) form the P-type domain. 3 cysteine pairs are disulfide-bonded: Cys228–Cys253, Cys237–Cys252, and Cys247–Cys262. A glycan (N-linked (GlcNAc...) asparagine) is linked at Asn240. The 272-residue stretch at 271–542 (QCFKSGYFTL…DTCSTTCDSG (272 aa)) folds into the ZP domain. Asn371 carries an N-linked (GlcNAc...) asparagine glycan. An intrachain disulfide couples Cys449 to Cys470. A propeptide spans 547-623 (RRSSGHHNIT…AQKLWEGIRY (77 aa)) (removed in mature form). N-linked (GlcNAc...) asparagine glycosylation is found at Asn554 and Asn585. A helical membrane pass occupies residues 591–611 (LLLLLAITLALAAGIFVGLIW). Residues 612 to 623 (AWAQKLWEGIRY) are Cytoplasmic-facing.

Belongs to the ZP domain family. ZPB subfamily. In terms of assembly, polymers of ZP2 and ZP3 organized into long filaments cross-linked by ZP1 homodimers. Interacts with ZP3. Proteolytically cleaved before the transmembrane segment to yield the secreted ectodomain incorporated in the zona pellucida. In terms of processing, O-glycosylated. Expressed in oocytes.

The protein localises to the zona pellucida. It localises to the cell membrane. Component of the zona pellucida, an extracellular matrix surrounding oocytes which mediates sperm binding, induction of the acrosome reaction and prevents post-fertilization polyspermy. The zona pellucida is composed of 3 to 4 glycoproteins, ZP1, ZP2, ZP3, and ZP4. ZP1 ensures the structural integrity of the zona pellucida. The sequence is that of Zona pellucida sperm-binding protein 1 (Zp1) from Mus musculus (Mouse).